We begin with the raw amino-acid sequence, 465 residues long: L-cystine uptake protein TcyP (465 aa).

The next 10 membrane-spanning stretches (helical) occupy residues 3–23 (LFLT…LFYM), 34–54 (VLLA…FFAP), 73–93 (YVRF…LSAF), 105–125 (ISAL…AIGI), 184–204 (PTSA…YLGV), 224–246 (AIIM…AIMT), 263–283 (FVLA…IILA), 338–358 (LSIG…VMIA), 370–390 (FILL…GVGG), and 394–414 (FAAI…GLLI).

This sequence belongs to the dicarboxylate/amino acid:cation symporter (DAACS) (TC 2.A.23) family.

Its subcellular location is the membrane. Functionally, mediates uptake of L-cystine, the oxidized form of L-cysteine. This chain is L-cystine uptake protein TcyP, found in Shouchella clausii (strain KSM-K16) (Alkalihalobacillus clausii).